Consider the following 358-residue polypeptide: Phospho-N-acetylmuramoyl-pentapeptide-transferase (358 aa).

The next 10 membrane-spanning stretches (helical) occupy residues 26–46, 71–91, 93–113, 134–154, 170–190, 197–217, 234–254, 261–281, 286–306, and 335–355; these read TIYA…WIIR, TPTM…LLWA, LTNV…LIGF, MFWQ…TPGF, LGIF…NAVN, GLAI…AYVA, AGEL…FLWF, VFMG…IAVL, ILLV…IFQV, and KIIV…ISTL.

Belongs to the glycosyltransferase 4 family. MraY subfamily. The cofactor is Mg(2+).

The protein localises to the cell inner membrane. It catalyses the reaction UDP-N-acetyl-alpha-D-muramoyl-L-alanyl-gamma-D-glutamyl-meso-2,6-diaminopimeloyl-D-alanyl-D-alanine + di-trans,octa-cis-undecaprenyl phosphate = di-trans,octa-cis-undecaprenyl diphospho-N-acetyl-alpha-D-muramoyl-L-alanyl-D-glutamyl-meso-2,6-diaminopimeloyl-D-alanyl-D-alanine + UMP. It functions in the pathway cell wall biogenesis; peptidoglycan biosynthesis. Its function is as follows. Catalyzes the initial step of the lipid cycle reactions in the biosynthesis of the cell wall peptidoglycan: transfers peptidoglycan precursor phospho-MurNAc-pentapeptide from UDP-MurNAc-pentapeptide onto the lipid carrier undecaprenyl phosphate, yielding undecaprenyl-pyrophosphoryl-MurNAc-pentapeptide, known as lipid I. The chain is Phospho-N-acetylmuramoyl-pentapeptide-transferase from Trichlorobacter lovleyi (strain ATCC BAA-1151 / DSM 17278 / SZ) (Geobacter lovleyi).